The following is a 184-amino-acid chain: ATP synthase subunit delta (184 aa).

It belongs to the ATPase delta chain family. As to quaternary structure, F-type ATPases have 2 components, F(1) - the catalytic core - and F(0) - the membrane proton channel. F(1) has five subunits: alpha(3), beta(3), gamma(1), delta(1), epsilon(1). F(0) has three main subunits: a(1), b(2) and c(10-14). The alpha and beta chains form an alternating ring which encloses part of the gamma chain. F(1) is attached to F(0) by a central stalk formed by the gamma and epsilon chains, while a peripheral stalk is formed by the delta and b chains.

The protein localises to the cell inner membrane. In terms of biological role, f(1)F(0) ATP synthase produces ATP from ADP in the presence of a proton or sodium gradient. F-type ATPases consist of two structural domains, F(1) containing the extramembraneous catalytic core and F(0) containing the membrane proton channel, linked together by a central stalk and a peripheral stalk. During catalysis, ATP synthesis in the catalytic domain of F(1) is coupled via a rotary mechanism of the central stalk subunits to proton translocation. This protein is part of the stalk that links CF(0) to CF(1). It either transmits conformational changes from CF(0) to CF(1) or is implicated in proton conduction. The protein is ATP synthase subunit delta of Rickettsia peacockii (strain Rustic).